Consider the following 1070-residue polypeptide: DNA-directed RNA polymerase subunit beta (1070 aa).

It belongs to the RNA polymerase beta chain family. As to quaternary structure, in plastids the minimal PEP RNA polymerase catalytic core is composed of four subunits: alpha, beta, beta', and beta''. When a (nuclear-encoded) sigma factor is associated with the core the holoenzyme is formed, which can initiate transcription.

It is found in the plastid. The protein localises to the chloroplast. It catalyses the reaction RNA(n) + a ribonucleoside 5'-triphosphate = RNA(n+1) + diphosphate. In terms of biological role, DNA-dependent RNA polymerase catalyzes the transcription of DNA into RNA using the four ribonucleoside triphosphates as substrates. In Daucus carota (Wild carrot), this protein is DNA-directed RNA polymerase subunit beta.